The primary structure comprises 317 residues: Methionyl-tRNA formyltransferase (317 aa).

112–115 (SILP) provides a ligand contact to (6S)-5,6,7,8-tetrahydrofolate.

This sequence belongs to the Fmt family.

The catalysed reaction is L-methionyl-tRNA(fMet) + (6R)-10-formyltetrahydrofolate = N-formyl-L-methionyl-tRNA(fMet) + (6S)-5,6,7,8-tetrahydrofolate + H(+). Its function is as follows. Attaches a formyl group to the free amino group of methionyl-tRNA(fMet). The formyl group appears to play a dual role in the initiator identity of N-formylmethionyl-tRNA by promoting its recognition by IF2 and preventing the misappropriation of this tRNA by the elongation apparatus. The sequence is that of Methionyl-tRNA formyltransferase from Actinobacillus succinogenes (strain ATCC 55618 / DSM 22257 / CCUG 43843 / 130Z).